A 479-amino-acid polypeptide reads, in one-letter code: NADH-quinone oxidoreductase subunit N (479 aa).

14 helical membrane passes run 3–23 (MLYG…FQLI), 40–60 (IGFA…FNGI), 77–97 (IIIL…IKVA), 102–122 (HSEY…LVSA), 125–145 (FMVM…LTTF), 159–179 (YFIL…LVYG), 200–220 (MAVL…KLSI), 234–254 (APLV…LALL), 268–288 (FFYI…VGAF), 299–319 (FIAY…VANS), 327–347 (ISYF…AIII), 373–393 (SILI…AGFI), 409–429 (ELII…LNIV), and 452–472 (LVSI…MLFG).

The protein belongs to the complex I subunit 2 family. In terms of assembly, NDH-1 is composed of 14 different subunits. Subunits NuoA, H, J, K, L, M, N constitute the membrane sector of the complex.

Its subcellular location is the cell inner membrane. The enzyme catalyses a quinone + NADH + 5 H(+)(in) = a quinol + NAD(+) + 4 H(+)(out). Its function is as follows. NDH-1 shuttles electrons from NADH, via FMN and iron-sulfur (Fe-S) centers, to quinones in the respiratory chain. The immediate electron acceptor for the enzyme in this species is believed to be ubiquinone. Couples the redox reaction to proton translocation (for every two electrons transferred, four hydrogen ions are translocated across the cytoplasmic membrane), and thus conserves the redox energy in a proton gradient. The polypeptide is NADH-quinone oxidoreductase subunit N (Orientia tsutsugamushi (strain Ikeda) (Rickettsia tsutsugamushi)).